Reading from the N-terminus, the 160-residue chain is Putative pre-16S rRNA nuclease (160 aa).

The protein belongs to the YqgF nuclease family.

Its subcellular location is the cytoplasm. Functionally, could be a nuclease involved in processing of the 5'-end of pre-16S rRNA. The chain is Putative pre-16S rRNA nuclease from Cereibacter sphaeroides (strain ATCC 17029 / ATH 2.4.9) (Rhodobacter sphaeroides).